The sequence spans 711 residues: Ribosomal RNA large subunit methyltransferase K/L (711 aa).

The 112-residue stretch at 43-154 folds into the THUMP domain; the sequence is TLYRTLLWSR…RENLVISLDL (112 aa).

This sequence belongs to the methyltransferase superfamily. RlmKL family.

It localises to the cytoplasm. The catalysed reaction is guanosine(2445) in 23S rRNA + S-adenosyl-L-methionine = N(2)-methylguanosine(2445) in 23S rRNA + S-adenosyl-L-homocysteine + H(+). It catalyses the reaction guanosine(2069) in 23S rRNA + S-adenosyl-L-methionine = N(2)-methylguanosine(2069) in 23S rRNA + S-adenosyl-L-homocysteine + H(+). Specifically methylates the guanine in position 2445 (m2G2445) and the guanine in position 2069 (m7G2069) of 23S rRNA. The sequence is that of Ribosomal RNA large subunit methyltransferase K/L from Haemophilus influenzae (strain ATCC 51907 / DSM 11121 / KW20 / Rd).